A 21-amino-acid polypeptide reads, in one-letter code: Protein YnfR (21 aa).

The sequence is that of Protein YnfR from Escherichia coli (strain K12).